The primary structure comprises 449 residues: Tapasin (449 aa).

Residues 1–20 (MKPLSLLLAVASALGTAVSA) form the signal peptide. At 21–413 (GPAVIECWMV…GLSGPSLEDS (393 aa)) the chain is on the lumenal side. C27 and C91 are joined by a disulfide. A glycan (N-linked (GlcNAc...) asparagine) is linked at N253. Residues 292 to 399 (PKISLTPAPL…PTLGRSAEVT (108 aa)) enclose the Ig-like C1-type domain. An intrachain disulfide couples C315 to C382. The helical transmembrane segment at 414–434 (VGLFLSAFLLLGLIKALGWVA) threads the bilayer. The Cytoplasmic portion of the chain corresponds to 435–449 (ASRSTSKDPKEKKAQ).

Heterodimer with PDIA3; disulfide-linked. Obligatory mediator for the interaction between newly assembled MHC class I molecules, calreticulin, PDIA3 and TAP. Up to 4 MHC class I/tapasin complexes bind to 1 TAP. Interacts with HLA-G-B2M complex; this interaction is required for loading of high affinity peptides. On its own or as part of MHC class I peptide loading complex, interacts with ligand-free MR1 or MR1-B2M complex, providing for stable MR1 pools ready for metabolite antigen processing.

It is found in the endoplasmic reticulum membrane. Involved in the association of MHC class I with transporter associated with antigen processing (TAP) and in the assembly of MHC class I with peptide (peptide loading). This chain is Tapasin (TAPBP), found in Canis lupus familiaris (Dog).